Here is a 197-residue protein sequence, read N- to C-terminus: Ribosome maturation factor RimM (197 aa).

Residues Asp92–Leu164 enclose the PRC barrel domain. The tract at residues Ile167–Ala197 is disordered. Residues Ser176–Ala186 are compositionally biased toward low complexity. The span at Glu187–Ala197 shows a compositional bias: basic and acidic residues.

The protein belongs to the RimM family. Binds ribosomal protein uS19.

It is found in the cytoplasm. An accessory protein needed during the final step in the assembly of 30S ribosomal subunit, possibly for assembly of the head region. Essential for efficient processing of 16S rRNA. May be needed both before and after RbfA during the maturation of 16S rRNA. It has affinity for free ribosomal 30S subunits but not for 70S ribosomes. The protein is Ribosome maturation factor RimM of Arthrobacter sp. (strain FB24).